A 391-amino-acid polypeptide reads, in one-letter code: Digeranylgeranylglycerophospholipid reductase (391 aa).

FAD is bound by residues Gly18, Glu37, Cys48, Ala49, Ala51, Arg98, Ala122, Asp279, Gly291, and Ile292.

Belongs to the geranylgeranyl reductase family. DGGGPL reductase subfamily. FAD serves as cofactor.

It catalyses the reaction a 2,3-bis-O-phytanyl-sn-glycerol 1-phospholipid + 8 A = a 2,3-bis-O-(geranylgeranyl)-sn-glycerol 1-phospholipid + 8 AH2. The catalysed reaction is 2,3-bis-O-(phytanyl)-sn-glycerol 1-phosphate + 8 A = 2,3-bis-O-(geranylgeranyl)-sn-glycerol 1-phosphate + 8 AH2. The enzyme catalyses CDP-2,3-bis-O-(geranylgeranyl)-sn-glycerol + 8 AH2 = CDP-2,3-bis-O-(phytanyl)-sn-glycerol + 8 A. It carries out the reaction archaetidylserine + 8 AH2 = 2,3-bis-O-phytanyl-sn-glycero-3-phospho-L-serine + 8 A. Its pathway is membrane lipid metabolism; glycerophospholipid metabolism. In terms of biological role, is involved in the reduction of 2,3-digeranylgeranylglycerophospholipids (unsaturated archaeols) into 2,3-diphytanylglycerophospholipids (saturated archaeols) in the biosynthesis of archaeal membrane lipids. Catalyzes the formation of archaetidic acid (2,3-di-O-phytanyl-sn-glyceryl phosphate) from 2,3-di-O-geranylgeranylglyceryl phosphate (DGGGP) via the hydrogenation of each double bond of the isoprenoid chains. Is also probably able to reduce double bonds of geranyl groups in CDP-2,3-bis-O-(geranylgeranyl)-sn-glycerol and archaetidylserine, thus acting at various stages in the biosynthesis of archaeal membrane lipids. The sequence is that of Digeranylgeranylglycerophospholipid reductase from Methanocaldococcus jannaschii (strain ATCC 43067 / DSM 2661 / JAL-1 / JCM 10045 / NBRC 100440) (Methanococcus jannaschii).